A 238-amino-acid polypeptide reads, in one-letter code: Ribosomal RNA small subunit methyltransferase G (238 aa).

Residues Gly-75, Leu-80, 126-127 (AE), and Arg-142 contribute to the S-adenosyl-L-methionine site.

This sequence belongs to the methyltransferase superfamily. RNA methyltransferase RsmG family.

It localises to the cytoplasm. In terms of biological role, specifically methylates the N7 position of guanine in position 518 of 16S rRNA. The sequence is that of Ribosomal RNA small subunit methyltransferase G from Streptomyces avermitilis (strain ATCC 31267 / DSM 46492 / JCM 5070 / NBRC 14893 / NCIMB 12804 / NRRL 8165 / MA-4680).